The primary structure comprises 480 residues: Protein nucleotidyltransferase YdiU (480 aa).

Gly-86, Gly-88, Arg-89, Lys-109, Asp-121, Gly-122, Arg-172, and Arg-179 together coordinate ATP. The active-site Proton acceptor is the Asp-248. Asn-249 and Asp-258 together coordinate Mg(2+). Asp-258 lines the ATP pocket.

It belongs to the SELO family. It depends on Mg(2+) as a cofactor. Mn(2+) is required as a cofactor.

It carries out the reaction L-seryl-[protein] + ATP = 3-O-(5'-adenylyl)-L-seryl-[protein] + diphosphate. It catalyses the reaction L-threonyl-[protein] + ATP = 3-O-(5'-adenylyl)-L-threonyl-[protein] + diphosphate. The enzyme catalyses L-tyrosyl-[protein] + ATP = O-(5'-adenylyl)-L-tyrosyl-[protein] + diphosphate. The catalysed reaction is L-histidyl-[protein] + UTP = N(tele)-(5'-uridylyl)-L-histidyl-[protein] + diphosphate. It carries out the reaction L-seryl-[protein] + UTP = O-(5'-uridylyl)-L-seryl-[protein] + diphosphate. It catalyses the reaction L-tyrosyl-[protein] + UTP = O-(5'-uridylyl)-L-tyrosyl-[protein] + diphosphate. Its function is as follows. Nucleotidyltransferase involved in the post-translational modification of proteins. It can catalyze the addition of adenosine monophosphate (AMP) or uridine monophosphate (UMP) to a protein, resulting in modifications known as AMPylation and UMPylation. The sequence is that of Protein nucleotidyltransferase YdiU from Salmonella heidelberg (strain SL476).